Reading from the N-terminus, the 247-residue chain is ATP synthase subunit a, chloroplastic (247 aa).

Transmembrane regions (helical) follow at residues 38 to 58 (QVLITSWVVITILLGSVIIAV), 95 to 115 (VPFIGTMFLFIFVSNWSGALL), 134 to 154 (INTTVALALLTSAAYFYAGLS), 199 to 219 (LVVVVLVSLVPLVVPIPVMFL), and 220 to 240 (GLFTSGIQALIFATLAAAYIG).

Belongs to the ATPase A chain family. In terms of assembly, F-type ATPases have 2 components, CF(1) - the catalytic core - and CF(0) - the membrane proton channel. CF(1) has five subunits: alpha(3), beta(3), gamma(1), delta(1), epsilon(1). CF(0) has four main subunits: a, b, b' and c.

It is found in the plastid. Its subcellular location is the chloroplast thylakoid membrane. Functionally, key component of the proton channel; it plays a direct role in the translocation of protons across the membrane. The sequence is that of ATP synthase subunit a, chloroplastic from Oryza sativa subsp. indica (Rice).